We begin with the raw amino-acid sequence, 277 residues long: Insertion element IS407 uncharacterized 31.7 kDa protein (277 aa).

The region spanning 103–264 (LPGAPNEVWS…APSEFAAKHR (162 aa)) is the Integrase catalytic domain.

The polypeptide is Insertion element IS407 uncharacterized 31.7 kDa protein (Burkholderia multivorans (strain ATCC 17616 / 249)).